Consider the following 808-residue polypeptide: DNA replication licensing factor MCM3 (808 aa).

Residue Ala-2 is modified to N-acetylalanine. A phosphoserine mark is found at Ser-160 and Ser-275. Lys-293 is modified (N6-acetyllysine). The region spanning 295 to 502 (IFDQLARSLA…QDREISDHVL (208 aa)) is the MCM domain. Gln-353, Leu-393, Glu-394, Ala-395, and Ala-397 together coordinate ADP. Positions 477 to 480 (SRFD) match the Arginine finger motif. Position 523 (Ala-523) interacts with ATP. Phosphoserine; by ATM is present on Ser-535. Lys-547 carries the N6-acetyllysine modification. Ser-611 carries the phosphoserine modification. Residues 662 to 738 (KKRKKRSEDE…QETKESQKVE (77 aa)) form a disordered region. Position 664 (Arg-664) interacts with ATP. Ser-668 and Ser-672 each carry phosphoserine. 2 stretches are compositionally biased toward acidic residues: residues 670-681 (DESETEDEEEKS) and 704-717 (SYDP…EEEM). A Phosphothreonine modification is found at Thr-674. Residue Ser-681 is modified to Phosphoserine. Position 708 is a phosphotyrosine (Tyr-708). Residue Ser-711 is modified to Phosphoserine. 3 positions are modified to phosphothreonine: Thr-713, Thr-722, and Thr-725. The segment covering 727-738 (DSQETKESQKVE) has biased composition (basic and acidic residues). A phosphoserine mark is found at Ser-728 and Ser-734.

This sequence belongs to the MCM family. Component of the MCM2-7 complex. The complex forms a toroidal hexameric ring with the proposed subunit order MCM2-MCM6-MCM4-MCM7-MCM3-MCM5. Component of the CMG helicase complex, a hexameric ring of related MCM2-7 subunits stabilized by CDC45 and the tetrameric GINS complex. Associated with the replication-specific DNA polymerase alpha. Interacts with MCMBP. Interacts with ANKRD17. Interacts with MCM3AP isoform MCM3AP; this interaction leads to MCM3 acetylation. Acetylated by MCM3AP. In terms of processing, O-glycosylated (O-GlcNAcylated), in a cell cycle-dependent manner.

Its subcellular location is the nucleus. It is found in the chromosome. The catalysed reaction is ATP + H2O = ADP + phosphate + H(+). Its function is as follows. Acts as a component of the MCM2-7 complex (MCM complex) which is the replicative helicase essential for 'once per cell cycle' DNA replication initiation and elongation in eukaryotic cells. Core component of CDC45-MCM-GINS (CMG) helicase, the molecular machine that unwinds template DNA during replication, and around which the replisome is built. The active ATPase sites in the MCM2-7 ring are formed through the interaction surfaces of two neighboring subunits such that a critical structure of a conserved arginine finger motif is provided in trans relative to the ATP-binding site of the Walker A box of the adjacent subunit. The six ATPase active sites, however, are likely to contribute differentially to the complex helicase activity. Required for the entry in S phase and for cell division. The polypeptide is DNA replication licensing factor MCM3 (MCM3) (Pongo abelii (Sumatran orangutan)).